Consider the following 381-residue polypeptide: DNA repair protein RAD51 homolog 3 (381 aa).

Residues 1–24 (MDEDINKDTNNNNNTTDSNNNNNN) are disordered. Low complexity predominate over residues 8-24 (DTNNNNNTTDSNNNNNN). Position 89 to 96 (89 to 96 (GVPGIGKT)) interacts with ATP. The segment at 313 to 381 (GFNHPPPLNP…NDENEMYIEN (69 aa)) is disordered. Residues 323–377 (EDQEQEKEKEKRKKKNNNNNNNNNNNNNNNNNNNNNNNNNNNNNNNNKNNDENEM) adopt a coiled-coil conformation. Over residues 339–370 (NNNNNNNNNNNNNNNNNNNNNNNNNNNNNNNK) the composition is skewed to low complexity.

This sequence belongs to the RecA family. RAD51 subfamily.

The protein resides in the nucleus. Functionally, involved in the homologous recombination repair (HRR) pathway of double-stranded DNA breaks arising during DNA replication or induced by DNA-damaging agents. This chain is DNA repair protein RAD51 homolog 3 (rad51c), found in Dictyostelium discoideum (Social amoeba).